We begin with the raw amino-acid sequence, 878 residues long: DNA mismatch repair protein MutS (878 aa).

Gly630 to Ser637 contributes to the ATP binding site.

This sequence belongs to the DNA mismatch repair MutS family.

In terms of biological role, this protein is involved in the repair of mismatches in DNA. It is possible that it carries out the mismatch recognition step. This protein has a weak ATPase activity. The sequence is that of DNA mismatch repair protein MutS from Chlorobaculum tepidum (strain ATCC 49652 / DSM 12025 / NBRC 103806 / TLS) (Chlorobium tepidum).